A 648-amino-acid polypeptide reads, in one-letter code: Serine/threonine-protein kinase PrkC (648 aa).

Topologically, residues 1-330 (MLIGKRISGR…KKNGKRKKWP (330 aa)) are cytoplasmic. The Protein kinase domain occupies 11 to 271 (YQILRVIGGG…DMEADIKTAF (261 aa)). Residues 17-25 (IGGGGMANV) and Lys40 contribute to the ATP site. Asp134 acts as the Proton acceptor in catalysis. Residues Thr162, Thr163, Thr165, and Thr167 each carry the phosphothreonine; by autocatalysis modification. Ser214 carries the phosphoserine; by autocatalysis modification. Thr290, Thr313, and Thr320 each carry phosphothreonine; by autocatalysis. A helical transmembrane segment spans residues 331 to 351 (WVLLTICLVFITAGILAVTVF). At 352–648 (PSLFMPKDVK…YKTIEYPKDE (297 aa)) the chain is on the extracellular side. 3 PASTA domains span residues 356-424 (MPKD…YKST), 425-492 (GKAK…TVSI), and 493-559 (GPED…TFSL).

The protein belongs to the protein kinase superfamily. Ser/Thr protein kinase family. Homodimer. Autophosphorylation on threonine residue(s) and serine residue considerably increases the kinase activity of the protein. Dephosphorylated in vitro by PrpC.

It localises to the spore membrane. It carries out the reaction L-seryl-[protein] + ATP = O-phospho-L-seryl-[protein] + ADP + H(+). The enzyme catalyses L-threonyl-[protein] + ATP = O-phospho-L-threonyl-[protein] + ADP + H(+). With respect to regulation, bryostatin activates PrkC activity and induces germination, whereas staurosporine inhibits PrkC and significantly reduced peptidoglycan-dependent germination. Kinase activity of isolated N-terminus stimulated by poly-L-lysine or myelin basic protein. Its function is as follows. Protein kinase that is responsible for triggering spore germination in response to muropeptides, signaling bacteria to exit dormancy. PrkC is thus a germination receptor that binds peptidoglycan fragments containing m-Dpm (meso-diaminopimelate), which act as spore germinants. Autophosphorylates and phosphorylates EF-G (elongation factor G, fusA); the latter modification is likely necessary for germination in response to peptidoglycan. Another group did not detect phosphorylation of EF-G. PrkC is a substrate in vitro of the cotranscribed phosphatase PrpC, which suggests that they form a functional couple in vivo. Might also be involved in sporulation and biofilm formation. Does not seem to be involved in stress response. The chain is Serine/threonine-protein kinase PrkC (prkC) from Bacillus subtilis (strain 168).